The primary structure comprises 67 residues: Brevinin-1CDYa (67 aa).

A signal peptide spans 1–22 (MFTLKKSLLLIFFLGTINLSLC). The propeptide occupies 23-45 (EEERNADEEERRDDLEERDVEVE). An intrachain disulfide couples Cys61 to Cys67.

It belongs to the frog skin active peptide (FSAP) family. Brevinin subfamily. As to expression, expressed by the skin glands.

It localises to the secreted. Its function is as follows. Antimicrobial peptide. Has low activity against the Gram-positive bacterium S.aureus (MIC=12.5 uM) and the Gram-negative bacterium E.coli (MIC=25 uM). Has weak hemolytic activity against human erythrocytes. In Rana dybowskii (Dybovsky's frog), this protein is Brevinin-1CDYa.